The primary structure comprises 154 residues: Peptide deformylase (154 aa).

Fe cation is bound by residues Cys90 and His132. Glu133 is an active-site residue. His136 lines the Fe cation pocket.

It belongs to the polypeptide deformylase family. Fe(2+) is required as a cofactor.

It catalyses the reaction N-terminal N-formyl-L-methionyl-[peptide] + H2O = N-terminal L-methionyl-[peptide] + formate. In terms of biological role, removes the formyl group from the N-terminal Met of newly synthesized proteins. Requires at least a dipeptide for an efficient rate of reaction. N-terminal L-methionine is a prerequisite for activity but the enzyme has broad specificity at other positions. The chain is Peptide deformylase from Desulforudis audaxviator (strain MP104C).